The primary structure comprises 201 residues: FMN-dependent NADH:quinone oxidoreductase (201 aa).

FMN is bound by residues serine 10, 16 to 18 (SQS), 96 to 99 (MYNF), and 140 to 143 (SRGG).

The protein belongs to the azoreductase type 1 family. Homodimer. It depends on FMN as a cofactor.

It catalyses the reaction 2 a quinone + NADH + H(+) = 2 a 1,4-benzosemiquinone + NAD(+). It carries out the reaction N,N-dimethyl-1,4-phenylenediamine + anthranilate + 2 NAD(+) = 2-(4-dimethylaminophenyl)diazenylbenzoate + 2 NADH + 2 H(+). Quinone reductase that provides resistance to thiol-specific stress caused by electrophilic quinones. Its function is as follows. Also exhibits azoreductase activity. Catalyzes the reductive cleavage of the azo bond in aromatic azo compounds to the corresponding amines. The sequence is that of FMN-dependent NADH:quinone oxidoreductase from Shigella flexneri serotype 5b (strain 8401).